Consider the following 403-residue polypeptide: uncharacterized protein (403 aa).

Positions 55–88 (LTGSPNPQATPKQENKSNFFSEKQSVRENGNSSA) are enriched in polar residues. The segment at 55–95 (LTGSPNPQATPKQENKSNFFSEKQSVRENGNSSAGEKKQKW) is disordered. S58 carries the phosphoserine modification. The J domain occupies 113–177 (QYYEILDLKK…NLRAHYDRTG (65 aa)). Residues 263–283 (SIFYQLLPLIVVILFAFLSNF) form a helical membrane-spanning segment.

Its subcellular location is the endoplasmic reticulum membrane. This is an uncharacterized protein from Schizosaccharomyces pombe (strain 972 / ATCC 24843) (Fission yeast).